The chain runs to 416 residues: 1-deoxy-D-xylulose 5-phosphate reductoisomerase (416 aa).

8 residues coordinate NADPH: T10, G11, S12, I13, G36, R37, N38, and N130. K131 contributes to the 1-deoxy-D-xylulose 5-phosphate binding site. Position 132 (E132) interacts with NADPH. A Mn(2+)-binding site is contributed by D156. 1-deoxy-D-xylulose 5-phosphate is bound by residues S157, E158, S194, and H217. E158 provides a ligand contact to Mn(2+). NADPH is bound at residue G223. Residues S230, N235, K236, and E239 each contribute to the 1-deoxy-D-xylulose 5-phosphate site. A Mn(2+)-binding site is contributed by E239.

This sequence belongs to the DXR family. Requires Mg(2+) as cofactor. The cofactor is Mn(2+).

The enzyme catalyses 2-C-methyl-D-erythritol 4-phosphate + NADP(+) = 1-deoxy-D-xylulose 5-phosphate + NADPH + H(+). It functions in the pathway isoprenoid biosynthesis; isopentenyl diphosphate biosynthesis via DXP pathway; isopentenyl diphosphate from 1-deoxy-D-xylulose 5-phosphate: step 1/6. Catalyzes the NADPH-dependent rearrangement and reduction of 1-deoxy-D-xylulose-5-phosphate (DXP) to 2-C-methyl-D-erythritol 4-phosphate (MEP). In Synechococcus sp. (strain CC9311), this protein is 1-deoxy-D-xylulose 5-phosphate reductoisomerase.